Consider the following 1058-residue polypeptide: Carbamoyl phosphate synthase pyrimidine-specific large chain (1058 aa).

Residues 1–401 (MPKRTDIHKI…ATLKAVRSLE (401 aa)) form a carboxyphosphate synthetic domain region. The ATP site is built by Arg129, Arg169, Gly175, Gly176, Gln208, Ile210, Glu215, Gly241, Ile242, His243, Gln284, and Glu298. Residues 133-327 (KALMEELGEP…IAKMAAKIAV (195 aa)) enclose the ATP-grasp 1 domain. Mg(2+)-binding residues include Gln284, Glu298, and Asn300. Mn(2+) contacts are provided by Gln284, Glu298, and Asn300. Residues 402 to 546 (IGVHHVEEPA…YGTYEFENES (145 aa)) form an oligomerization domain region. Residues 547–929 (IVTKRPSVLV…ALYKAFEAAK (383 aa)) are carbamoyl phosphate synthetic domain. Residues 671 to 861 (DKVIKALAIP…MAQVATRAIL (191 aa)) enclose the ATP-grasp 2 domain. ATP-binding residues include Arg707, Ser746, Leu748, Glu752, Gly777, Val778, His779, Ser780, Gln820, and Glu832. Residues Gln820, Glu832, and Asn834 each coordinate Mg(2+). Residues Gln820, Glu832, and Asn834 each coordinate Mn(2+). In terms of domain architecture, MGS-like spans 930-1058 (LHVPSHGNVL…ESQSFVTQAL (129 aa)). Residues 930 to 1058 (LHVPSHGNVL…ESQSFVTQAL (129 aa)) form an allosteric domain region.

Belongs to the CarB family. In terms of assembly, composed of two chains; the small (or glutamine) chain promotes the hydrolysis of glutamine to ammonia, which is used by the large (or ammonia) chain to synthesize carbamoyl phosphate. Tetramer of heterodimers (alpha,beta)4. Requires Mg(2+) as cofactor. Mn(2+) serves as cofactor.

The catalysed reaction is hydrogencarbonate + L-glutamine + 2 ATP + H2O = carbamoyl phosphate + L-glutamate + 2 ADP + phosphate + 2 H(+). The enzyme catalyses hydrogencarbonate + NH4(+) + 2 ATP = carbamoyl phosphate + 2 ADP + phosphate + 2 H(+). It participates in amino-acid biosynthesis; L-arginine biosynthesis; carbamoyl phosphate from bicarbonate: step 1/1. The protein operates within pyrimidine metabolism; UMP biosynthesis via de novo pathway; (S)-dihydroorotate from bicarbonate: step 1/3. Small subunit of the glutamine-dependent carbamoyl phosphate synthetase (CPSase). CPSase catalyzes the formation of carbamoyl phosphate from the ammonia moiety of glutamine, carbonate, and phosphate donated by ATP, constituting the first step of the biosynthetic pathway leading to pyrimidine nucleotides. The large subunit (synthetase) binds the substrates ammonia (free or transferred from glutamine from the small subunit), hydrogencarbonate and ATP and carries out an ATP-coupled ligase reaction, activating hydrogencarbonate by forming carboxy phosphate which reacts with ammonia to form carbamoyl phosphate. The protein is Carbamoyl phosphate synthase pyrimidine-specific large chain (pyrAB) of Lactiplantibacillus plantarum (strain ATCC BAA-793 / NCIMB 8826 / WCFS1) (Lactobacillus plantarum).